The chain runs to 358 residues: MPAFADIAIDPPLADSYRALALLRRDRDGGIAPPAVQMVGSGGAVLERDLPMVDLERLTRGGAGERKACAGAMARAASEWGFFQLTNHGVGRELMEEMRREQARLFRLPFETKEKAGLLNGSYRWGNPTATSLRHLSWSEAFHVPLASISGADCDFGDLTSLRGVMQEVAEAMSRVANTVAAALAEELTGRGGGGASAAPWFPAGCDETTCFLRLNRYPACPFAADTFGLVPHTDSDFLTVLCQDQVGGLHLMKDSRWVAVRPRPDALVVNIGDLFQAWSNNRYKSVEHKVVANAKTDRLSVAYFLCPSYDSLVGTCGEPSPYRAFTFGEYRKKVQEDVRTTGKKIGLPNFFKHSSVQ.

Residues 207 to 308 (DETTCFLRLN…RLSVAYFLCP (102 aa)) form the Fe2OG dioxygenase domain. Tyrosine 218 is a 2-oxoglutarate binding site. Residues histidine 233, aspartate 235, and histidine 289 each coordinate Fe cation. 2-oxoglutarate is bound by residues arginine 299 and serine 301.

It belongs to the iron/ascorbate-dependent oxidoreductase family. GA2OX subfamily. The cofactor is L-ascorbate. Fe(2+) serves as cofactor. As to expression, expressed in panicles. Expressed at low levels in young shoots, leaf blades and elongating internodes.

Its subcellular location is the cytoplasm. The protein localises to the nucleus. It carries out the reaction gibberellin A1 + 2-oxoglutarate + O2 = gibberellin A8 + succinate + CO2. Functionally, catalyzes the 2-beta-hydroxylation of several biologically active gibberellins, leading to the homeostatic regulation of their endogenous level. Catabolism of gibberellins (GAs) plays a central role in plant development. In vitro, converts GA12 and GA53 to the corresponding 2-beta-hydroxylated products GA110 and GA97, respectively. The protein is Gibberellin 2-beta-dioxygenase 6 of Oryza sativa subsp. japonica (Rice).